Here is a 214-residue protein sequence, read N- to C-terminus: Phosphatidylcholine transfer protein (214 aa).

An N-acetylmethionine modification is found at M1. The START domain occupies 1–212; it reads MELAAGSFSE…MARACQNYLK (212 aa). Y72 and R78 together coordinate a 1,2-diacyl-sn-glycero-3-phosphocholine. S139 bears the Phosphoserine mark. Position 157 (Q157) interacts with a 1,2-diacyl-sn-glycero-3-phosphocholine.

In terms of assembly, interacts with ACOT13/THEM2. In terms of tissue distribution, highest expression in liver, placenta, testis, kidney and heart. Low levels in brain and lung. No expression detected in thymus.

Its subcellular location is the cytoplasm. Functionally, catalyzes the transfer of phosphatidylcholine between membranes. Binds a single lipid molecule. The chain is Phosphatidylcholine transfer protein (PCTP) from Homo sapiens (Human).